We begin with the raw amino-acid sequence, 391 residues long: Period circadian protein (391 aa).

Disordered stretches follow at residues 27-121, 163-188, 241-270, and 328-357; these read VTAP…PPVT, MLEYSGPGPGHGHGIKRGGSHSWEGE, GSSAGGNGSGTGNNNGNGNNNQPTTNQFTQ, and SPSGTSPNPNRPHKHAHVHSSSEKPSTSQA. Positions 93–114 are enriched in gly residues; that stretch reads GTSGTGNSGDGGGGGGADGPGS. Over residues 241–255 the composition is skewed to gly residues; that stretch reads GSSAGGNGSGTGNNN.

In terms of assembly, forms a heterodimer with timeless (TIM); the complex then translocates into the nucleus. Phosphorylated with a circadian rhythmicity, probably by the double-time protein (dbt). Phosphorylation could be implicated in the stability of per monomer and in the formation of heterodimer per-tim.

The protein resides in the nucleus. Its subcellular location is the cytoplasm. It is found in the perinuclear region. In terms of biological role, essential for biological clock functions. Determines the period length of circadian and ultradian rhythms; an increase in PER dosage leads to shortened circadian rhythms and a decrease leads to lengthened circadian rhythms. Essential for the circadian rhythmicity of locomotor activity, eclosion behavior, and for the rhythmic component of the male courtship song that originates in the thoracic nervous system. The biological cycle depends on the rhythmic formation and nuclear localization of the TIM-PER complex. Light induces the degradation of TIM, which promotes elimination of PER. Nuclear activity of the heterodimer coordinatively regulates PER and TIM transcription through a negative feedback loop. Behaves as a negative element in circadian transcriptional loop. Does not appear to bind DNA, suggesting indirect transcriptional inhibition. The polypeptide is Period circadian protein (per) (Drosophila insularis (Fruit fly)).